The following is an 809-amino-acid chain: MAYKHQIIERKWQHYWRANHTFETSDSQTKPKYYVMDMFPYPSGQGLHVGHPEGYTATDIMARLKRMQGFNVLHPMGWDAFGLPAEQYALKTGHNPKDFTAHNIKNFKRQIRSLGFSYDWSREINTTDESYYKWTQWIFEQLYKKGLAYEDKIMVNWAPDFMGGTVVANEEVIDGKTERGGYPVYRVPMRQWVLKITAYADRLIDDLDDLDWPDSIKEMQRNWIGRSEGASVFFPVDGQADTKIEVYTTRPDTLFGATYMVLAPEHAAVAKITTPEQADAVKAYQEAIESKSDLERTDLNKDKTGVFTGAYGINPLSGKKLPIWIGDYVLSSYGTGAIMAVPAHDERDHEFATKFNLPITQVIEGDADTDITEAAYTDDGKHINSDFMNGMDKQTAISAAIDWLTEHDAGHKQVNFRLRDWIFSRQRYWGEPIPVIHWENGETTLVPEDELPLKLPAAKQLEPSGTGESPLANLDDWVNVVDENGRKGKRETNTMPQWAGSSWYFLRYVDPTNDQAIADPEKLKYWMPVDLYIGGAEHAVLHLLYARFWHKFLYDLGVVPTKEPFQKLVNQGMILGTNHEKMSKSKGNVINPDEIVEKHGADTLRLYEMFMGPLEASKPWSTEGINGSRRWLDRVWRLLIDDNNRLRDRVTMINDGALDKIYNQTVKTVTEDLEAMRFNVAISQLMVFVNEAYKVDSLPMIYMEGFVKLISPIVPHIAEELWSLLGHDETIAYAKWPTYDAKQLVEDVVELVVQVNGKVRAHLKVAKDATKDAIEAAALADETVQVHTDGKTVRKVIVVPGKLVNIVAN.

Residues 40–51 (PYPSGQGLHVGH) carry the 'HIGH' region motif. The short motif at 581-585 (KMSKS) is the 'KMSKS' region element. Lysine 584 lines the ATP pocket.

Belongs to the class-I aminoacyl-tRNA synthetase family.

The protein localises to the cytoplasm. It catalyses the reaction tRNA(Leu) + L-leucine + ATP = L-leucyl-tRNA(Leu) + AMP + diphosphate. This is Leucine--tRNA ligase from Levilactobacillus brevis (strain ATCC 367 / BCRC 12310 / CIP 105137 / JCM 1170 / LMG 11437 / NCIMB 947 / NCTC 947) (Lactobacillus brevis).